Consider the following 325-residue polypeptide: MINVGIIGGSGYTAGELIRILMYHPKVNIDFVYSTTNAGKPLSVAHHDLMGDIEMNFTAEINPNVNVVFLCLGHGKSISFLKENQFASHTKIIDLGNDFRLNKDAHFEGKDFVYGLPEINKAEIKKTNYIANPGCFATAIQLALLPLAKHNLLNNDVHINATTGSTGAGVSLSETSHFSWRNNNMSHYKAFEHQHLGEIGESLVQLQDDFDSELLFIPNRGDFPRGIFATLYTLCDDSLEQLVAKYEEFYKNEPFVTVTTTNINMKQVVQTNKCIISLLKKGNRVLITSIIDNLTKGASGQAIQNMNLMFGLEETTGLHLKPSGF.

The active site involves Cys-135.

It belongs to the NAGSA dehydrogenase family. Type 1 subfamily.

It localises to the cytoplasm. The catalysed reaction is N-acetyl-L-glutamate 5-semialdehyde + phosphate + NADP(+) = N-acetyl-L-glutamyl 5-phosphate + NADPH + H(+). Its pathway is amino-acid biosynthesis; L-arginine biosynthesis; N(2)-acetyl-L-ornithine from L-glutamate: step 3/4. Catalyzes the NADPH-dependent reduction of N-acetyl-5-glutamyl phosphate to yield N-acetyl-L-glutamate 5-semialdehyde. The chain is N-acetyl-gamma-glutamyl-phosphate reductase from Flavobacterium johnsoniae (strain ATCC 17061 / DSM 2064 / JCM 8514 / BCRC 14874 / CCUG 350202 / NBRC 14942 / NCIMB 11054 / UW101) (Cytophaga johnsonae).